The sequence spans 362 residues: Protein RecA (362 aa).

65–72 contributes to the ATP binding site; sequence GPESSGKT. The segment at 323–362 is disordered; the sequence is RVANGMEPLNEKSTKETADDKASGKTGENKQETIEEASKE. The span at 331-362 shows a compositional bias: basic and acidic residues; that stretch reads LNEKSTKETADDKASGKTGENKQETIEEASKE.

This sequence belongs to the RecA family.

It localises to the cytoplasm. In terms of biological role, can catalyze the hydrolysis of ATP in the presence of single-stranded DNA, the ATP-dependent uptake of single-stranded DNA by duplex DNA, and the ATP-dependent hybridization of homologous single-stranded DNAs. It interacts with LexA causing its activation and leading to its autocatalytic cleavage. The protein is Protein RecA of Limosilactobacillus reuteri (strain DSM 20016) (Lactobacillus reuteri).